We begin with the raw amino-acid sequence, 159 residues long: Transcription elongation factor GreA (159 aa).

Residues 43–75 are a coiled coil; it reads LSENAEYDAAREEQSQLEAKIGEIENKLASATI.

This sequence belongs to the GreA/GreB family.

Its function is as follows. Necessary for efficient RNA polymerase transcription elongation past template-encoded arresting sites. The arresting sites in DNA have the property of trapping a certain fraction of elongating RNA polymerases that pass through, resulting in locked ternary complexes. Cleavage of the nascent transcript by cleavage factors such as GreA or GreB allows the resumption of elongation from the new 3'terminus. GreA releases sequences of 2 to 3 nucleotides. In Chlorobaculum tepidum (strain ATCC 49652 / DSM 12025 / NBRC 103806 / TLS) (Chlorobium tepidum), this protein is Transcription elongation factor GreA.